We begin with the raw amino-acid sequence, 475 residues long: ATP-dependent protease ATPase subunit HslU1 (475 aa).

The N-terminal 27 residues, 1–27, are a transit peptide targeting the mitochondrion; that stretch reads MMRRVTSSLPSALKLGRSLGPNVRFSG. Residues isoleucine 66, 108–113, aspartate 286, glutamate 353, and arginine 425 contribute to the ATP site; that span reads GVGKTE.

It belongs to the ClpX chaperone family. HslU subfamily. As to quaternary structure, a double ring-shaped homohexamer of HslV is capped on each side by a ring-shaped HslU homohexamer. The assembly of the HslU/HslV complex (HslVU) is dependent on binding of ATP.

It is found in the mitochondrion matrix. The protein resides in the kinetoplast. ATPase subunit of a proteasome-like degradation complex; this subunit has chaperone activity. The binding of ATP and its subsequent hydrolysis by HslU are essential for unfolding of protein substrates subsequently hydrolyzed by HslV. HslU recognizes the N-terminal part of its protein substrates and unfolds these before they are guided to HslV for hydrolysis. The HslVU protease complex functions in mitochondrial DNA replication by regulating DNA helicase PIF2 protein levels. The polypeptide is ATP-dependent protease ATPase subunit HslU1 (HslU1) (Trypanosoma brucei brucei (strain 927/4 GUTat10.1)).